The sequence spans 261 residues: 5'-nucleotidase SurE (261 aa).

Residues D8, D9, S39, and N94 each coordinate a divalent metal cation.

The protein belongs to the SurE nucleotidase family. The cofactor is a divalent metal cation.

It localises to the cytoplasm. It carries out the reaction a ribonucleoside 5'-phosphate + H2O = a ribonucleoside + phosphate. Nucleotidase that shows phosphatase activity on nucleoside 5'-monophosphates. This Methanopyrus kandleri (strain AV19 / DSM 6324 / JCM 9639 / NBRC 100938) protein is 5'-nucleotidase SurE.